A 219-amino-acid polypeptide reads, in one-letter code: Ribonuclease HII (219 aa).

Positions 10 to 219 (HLEAGTDEAG…LLPEQTVLDL (210 aa)) constitute an RNase H type-2 domain. Asp16, Glu17, and Asp108 together coordinate a divalent metal cation.

The protein belongs to the RNase HII family. Mn(2+) serves as cofactor. Mg(2+) is required as a cofactor.

Its subcellular location is the cytoplasm. It catalyses the reaction Endonucleolytic cleavage to 5'-phosphomonoester.. Its function is as follows. Endonuclease that specifically degrades the RNA of RNA-DNA hybrids. The protein is Ribonuclease HII of Flavobacterium psychrophilum (strain ATCC 49511 / DSM 21280 / CIP 103535 / JIP02/86).